The chain runs to 98 residues: NADH-ubiquinone oxidoreductase chain 4L (98 aa).

3 helical membrane-spanning segments follow: residues 1-21 (MTLI…GLLM), 29-49 (ALLC…LTIL), and 61-81 (IILL…LVMV).

This sequence belongs to the complex I subunit 4L family. Core subunit of respiratory chain NADH dehydrogenase (Complex I) which is composed of 45 different subunits.

It is found in the mitochondrion inner membrane. It carries out the reaction a ubiquinone + NADH + 5 H(+)(in) = a ubiquinol + NAD(+) + 4 H(+)(out). Its function is as follows. Core subunit of the mitochondrial membrane respiratory chain NADH dehydrogenase (Complex I) which catalyzes electron transfer from NADH through the respiratory chain, using ubiquinone as an electron acceptor. Part of the enzyme membrane arm which is embedded in the lipid bilayer and involved in proton translocation. The sequence is that of NADH-ubiquinone oxidoreductase chain 4L (MT-ND4L) from Balaenoptera borealis (Sei whale).